A 192-amino-acid chain; its full sequence is Ion-translocating oxidoreductase complex subunit A (192 aa).

Helical transmembrane passes span 5 to 25, 39 to 59, 65 to 85, 102 to 122, 134 to 154, and 171 to 191; these read ALIL…FLGL, TGMG…SYLV, APLG…AAVV, VLGI…VALL, ALYG…FASI, and AIAL…IGLV.

It belongs to the NqrDE/RnfAE family. As to quaternary structure, the complex is composed of six subunits: RnfA, RnfB, RnfC, RnfD, RnfE and RnfG.

It is found in the cell inner membrane. Part of a membrane-bound complex that couples electron transfer with translocation of ions across the membrane. This Thioalkalivibrio sulfidiphilus (strain HL-EbGR7) protein is Ion-translocating oxidoreductase complex subunit A.